We begin with the raw amino-acid sequence, 101 residues long: Large ribosomal subunit protein uL23 (101 aa).

The protein belongs to the universal ribosomal protein uL23 family. As to quaternary structure, part of the 50S ribosomal subunit. Contacts protein L29, and trigger factor when it is bound to the ribosome.

One of the early assembly proteins it binds 23S rRNA. One of the proteins that surrounds the polypeptide exit tunnel on the outside of the ribosome. Forms the main docking site for trigger factor binding to the ribosome. The protein is Large ribosomal subunit protein uL23 of Leptospira biflexa serovar Patoc (strain Patoc 1 / Ames).